Here is a 166-residue protein sequence, read N- to C-terminus: MRGINPVLFKISFLLIILVSLILSLFYYNFLFAFLLSFILFGITWAYCYIKIESTDKGKLLYEIKRPGIETLRFLFILMIISVFIKSLLHSNSFFPYISFLLSNLILGLVLFDDYILGNPTIKFYEKGVVFDRVAFYNWEELDIKEDEGYLKIKIKYYPKEIMYKK.

4 helical membrane passes run 7–27 (VLFKISFLLIILVSLILSLFY), 30–50 (FLFAFLLSFILFGITWAYCYI), 69–89 (IETLRFLFILMIISVFIKSLL), and 92–112 (NSFFPYISFLLSNLILGLVLF).

To M.jannaschii MJ0795.1 and MJ0785.1.

The protein resides in the cell membrane. This is an uncharacterized protein from Methanocaldococcus jannaschii (strain ATCC 43067 / DSM 2661 / JAL-1 / JCM 10045 / NBRC 100440) (Methanococcus jannaschii).